Here is a 215-residue protein sequence, read N- to C-terminus: Cytochrome b6 (215 aa).

Residues 32–52 (IFYCLGGITLTCFLVQVATGF) traverse the membrane as a helical segment. C35 contacts heme c. The heme b site is built by H86 and H100. 3 helical membrane-spanning segments follow: residues 90 to 110 (ASMM…TGGF), 116 to 136 (LTWV…VTGY), and 186 to 206 (LHTF…FPMI). Positions 187 and 202 each coordinate heme b.

Belongs to the cytochrome b family. PetB subfamily. As to quaternary structure, the 4 large subunits of the cytochrome b6-f complex are cytochrome b6, subunit IV (17 kDa polypeptide, PetD), cytochrome f and the Rieske protein, while the 4 small subunits are PetG, PetL, PetM and PetN. The complex functions as a dimer. The cofactor is heme b. Requires heme c as cofactor.

It is found in the plastid. It localises to the chloroplast thylakoid membrane. Its function is as follows. Component of the cytochrome b6-f complex, which mediates electron transfer between photosystem II (PSII) and photosystem I (PSI), cyclic electron flow around PSI, and state transitions. The sequence is that of Cytochrome b6 from Cucumis sativus (Cucumber).